The sequence spans 312 residues: Non-structural protein 12A (312 aa).

The segment covering 1-23 (MFKSGSGSLKRSGSISSVKSFSG) has biased composition (low complexity). Disordered regions lie at residues 1–37 (MFKSGSGSLKRSGSISSVKSFSGDSEKGLPPISRGSV), 63–97 (VPEKTKSEGNLKNKSSVITGNFESSGPTNAHYNQN), and 114–162 (KGRG…TGDG). A compositionally biased stretch (basic and acidic residues) spans 63-73 (VPEKTKSEGNL). Polar residues predominate over residues 74–97 (KNKSSVITGNFESSGPTNAHYNQN). The span at 122–134 (DARHTATDSRLSQ) shows a compositional bias: basic and acidic residues.

The protein belongs to the phytoreovirus non-structural protein Pns12A family.

Its subcellular location is the host cytoplasm. Constituent of viral factories. The sequence is that of Non-structural protein 12A from Rice dwarf virus (isolate Fujian) (RDV).